The sequence spans 253 residues: Troponin T, fast skeletal muscle isoforms (253 aa).

Residues 1-25 are compositionally biased toward acidic residues; the sequence is MSDTEEVEHGEEEYEEEEEVQEEEV. Disordered stretches follow at residues 1–58 and 97–178; these read MSDT…DIQK and RAER…VLAE. S2 carries the post-translational modification N-acetylserine. 3 stretches are compositionally biased toward basic and acidic residues: residues 46 to 58, 97 to 139, and 167 to 178; these read PEGEKVDFDDIQK, RAER…DDLK, and TARETKKKVLAE.

It belongs to the troponin T family.

In terms of biological role, troponin T is the tropomyosin-binding subunit of troponin, the thin filament regulatory complex which confers calcium-sensitivity to striated muscle actomyosin ATPase activity. In Coturnix japonica (Japanese quail), this protein is Troponin T, fast skeletal muscle isoforms (TNNT3).